Reading from the N-terminus, the 295-residue chain is Small ribosomal subunit protein uS2 (295 aa).

Positions 263–295 (KKFSKTKNIDEETNTEFEQALNDADENKNSDNA) are disordered.

Belongs to the universal ribosomal protein uS2 family.

The chain is Small ribosomal subunit protein uS2 from Rickettsia massiliae (strain Mtu5).